Here is a 478-residue protein sequence, read N- to C-terminus: tRNA(Ile)-lysidine synthase (478 aa).

Position 27 to 32 (27 to 32 (SGGSDS)) interacts with ATP.

Belongs to the tRNA(Ile)-lysidine synthase family.

The protein localises to the cytoplasm. It catalyses the reaction cytidine(34) in tRNA(Ile2) + L-lysine + ATP = lysidine(34) in tRNA(Ile2) + AMP + diphosphate + H(+). In terms of biological role, ligates lysine onto the cytidine present at position 34 of the AUA codon-specific tRNA(Ile) that contains the anticodon CAU, in an ATP-dependent manner. Cytidine is converted to lysidine, thus changing the amino acid specificity of the tRNA from methionine to isoleucine. The protein is tRNA(Ile)-lysidine synthase of Rickettsia conorii (strain ATCC VR-613 / Malish 7).